A 297-amino-acid chain; its full sequence is 4-hydroxy-tetrahydrodipicolinate synthase (297 aa).

Thr-49 lines the pyruvate pocket. The Proton donor/acceptor role is filled by Tyr-137. Residue Lys-166 is the Schiff-base intermediate with substrate of the active site. A pyruvate-binding site is contributed by Ile-208.

It belongs to the DapA family. Homotetramer; dimer of dimers.

It is found in the cytoplasm. It catalyses the reaction L-aspartate 4-semialdehyde + pyruvate = (2S,4S)-4-hydroxy-2,3,4,5-tetrahydrodipicolinate + H2O + H(+). The protein operates within amino-acid biosynthesis; L-lysine biosynthesis via DAP pathway; (S)-tetrahydrodipicolinate from L-aspartate: step 3/4. Functionally, catalyzes the condensation of (S)-aspartate-beta-semialdehyde [(S)-ASA] and pyruvate to 4-hydroxy-tetrahydrodipicolinate (HTPA). This chain is 4-hydroxy-tetrahydrodipicolinate synthase, found in Prosthecochloris aestuarii (strain DSM 271 / SK 413).